Here is a 709-residue protein sequence, read N- to C-terminus: Cell adhesion molecule CEACAM3 (709 aa).

The signal sequence occupies residues 1–34 (MELSSVLPCKRCTPWRGLLLTASLLTCWLLPTTA). 5 Ig-like V-type domains span residues 35–142 (QVSI…HVYF), 155–262 (QLSI…QVDT), 275–382 (QLTV…QVNT), 393–500 (LLTI…SVHT), and 509–616 (QLVI…HIYK). 16 N-linked (GlcNAc...) asparagine glycosylation sites follow: Asn-73, Asn-86, Asn-103, Asn-110, Asn-133, Asn-207, Asn-224, Asn-231, Asn-327, Asn-344, Asn-351, Asn-381, Asn-462, Asn-561, Asn-578, and Asn-585. The Ig-like C2-type domain occupies 631-695 (RVKSSVVLTC…YRCEVSNPVS (65 aa)).

The protein belongs to the immunoglobulin superfamily. CEA family. As to expression, expression detected only in placenta.

Functionally, possibly involved in cell adhesion. The polypeptide is Cell adhesion molecule CEACAM3 (Rattus norvegicus (Rat)).